Consider the following 216-residue polypeptide: Probable nicotinate-nucleotide adenylyltransferase (216 aa).

It belongs to the NadD family.

The enzyme catalyses nicotinate beta-D-ribonucleotide + ATP + H(+) = deamido-NAD(+) + diphosphate. The protein operates within cofactor biosynthesis; NAD(+) biosynthesis; deamido-NAD(+) from nicotinate D-ribonucleotide: step 1/1. In terms of biological role, catalyzes the reversible adenylation of nicotinate mononucleotide (NaMN) to nicotinic acid adenine dinucleotide (NaAD). This Geobacillus kaustophilus (strain HTA426) protein is Probable nicotinate-nucleotide adenylyltransferase.